We begin with the raw amino-acid sequence, 175 residues long: Type II restriction enzyme NgoBV (175 aa).

The enzyme catalyses Endonucleolytic cleavage of DNA to give specific double-stranded fragments with terminal 5'-phosphates.. A P subtype restriction enzyme that recognizes the double-stranded sequence 5'-GGNNCC-3'; the cleavage site is unknown. This chain is Type II restriction enzyme NgoBV (ngoBVR), found in Neisseria gonorrhoeae.